The chain runs to 396 residues: Phosphoglycerate kinase (396 aa).

Residues 21-23, Arg-36, 59-62, Arg-118, and Arg-151 each bind substrate; these read DFN and HFDR. Residues Lys-201, Glu-323, and 353–356 contribute to the ATP site; that span reads GGDT.

It belongs to the phosphoglycerate kinase family. As to quaternary structure, monomer.

Its subcellular location is the cytoplasm. It carries out the reaction (2R)-3-phosphoglycerate + ATP = (2R)-3-phospho-glyceroyl phosphate + ADP. It functions in the pathway carbohydrate degradation; glycolysis; pyruvate from D-glyceraldehyde 3-phosphate: step 2/5. In Caulobacter vibrioides (strain ATCC 19089 / CIP 103742 / CB 15) (Caulobacter crescentus), this protein is Phosphoglycerate kinase.